The following is a 154-amino-acid chain: Ribosome maturation factor RimP (154 aa).

Belongs to the RimP family.

The protein resides in the cytoplasm. Its function is as follows. Required for maturation of 30S ribosomal subunits. This Desulforudis audaxviator (strain MP104C) protein is Ribosome maturation factor RimP.